The sequence spans 684 residues: Coiled-coil domain-containing protein 62 (684 aa).

2 coiled-coil regions span residues Arg11–Thr160 and Thr199–Ala322. Positions Ser579–Thr603 are disordered. A compositionally biased stretch (polar residues) spans Ser594–Thr603. 2 short sequence motifs (LXXLL motif) span residues Leu634–Leu638 and Leu650–Leu654. The interval Ser657–Tyr684 is disordered. Polar residues predominate over residues Glu659–Ser669.

In terms of assembly, interacts with ESR1 and ESR2 in the presence of estradiol/E2. The interaction with ESR2 recruits CCDC62 to ER target genes, including cyclin-D1/CCND1 AP-1 promoter. Interacts with GOPC. In terms of tissue distribution, highly expressed in adult testis. Expressed in both prostate epithelial and stromal cells, with predominant expression in epithelial cells (at protein level). Not detected in prostate by RT-PCR. Overexpressed in various cancers.

It localises to the cytoplasm. Its subcellular location is the nucleus. The protein localises to the cytoplasmic vesicle. The protein resides in the secretory vesicle. It is found in the acrosome. Nuclear receptor coactivator that can enhance preferentially estrogen receptors ESR1 and ESR2 transactivation. Also modulates progesterone/PGR, glucocorticoid/NR3C1 and androgen/AR receptors transactivation, although at lower level; little effect on vitamin D receptor/VDR. Required for normal spermiogenesis. It probably plays a role in acrosome formation. In Homo sapiens (Human), this protein is Coiled-coil domain-containing protein 62 (CCDC62).